The primary structure comprises 440 residues: Cell division protein DivIB (440 aa).

The span at 1-10 shows a compositional bias: basic and acidic residues; that stretch reads MMDDKTKNDQ. Disordered stretches follow at residues 1 to 97 and 123 to 154; these read MMDD…DSNI and QHQS…TQLK. Over 1–174 the chain is Cytoplasmic; that stretch reads MMDDKTKNDQ…RRKRQKRIQY (174 aa). The span at 12-21 shows a compositional bias: acidic residues; it reads ESNEDKDELE. Residues 27–39 are compositionally biased toward basic residues; that stretch reads TSKKRRQRKRSKA. The segment covering 78–87 has biased composition (low complexity); the sequence is DSASSHANDN. Residues 88-97 are compositionally biased toward acidic residues; sequence NIDDSTDSNI. The span at 124 to 134 shows a compositional bias: polar residues; the sequence is HQSAPNEQNSD. A helical transmembrane segment spans residues 175–195; it reads SVITILVLLIAVILIYMFSPL. Residues 196–264 form the POTRA domain; that stretch reads SKIAHVNING…NTLNVDITEN (69 aa). Residues 196–440 lie on the Extracellular side of the membrane; the sequence is SKIAHVNING…KINKQSSKNN (245 aa). Positions 397–440 are disordered; the sequence is YRGNTSTQSESDKNVTKSSQEENQAKEELQSVLNKINKQSSKNN. A compositionally biased stretch (basic and acidic residues) spans 406–425; sequence ESDKNVTKSSQEENQAKEEL. The span at 427–440 shows a compositional bias: polar residues; that stretch reads SVLNKINKQSSKNN.

This sequence belongs to the FtsQ/DivIB family. DivIB subfamily.

The protein localises to the cell membrane. In terms of biological role, cell division protein that may be involved in stabilizing or promoting the assembly of the division complex. In Staphylococcus aureus (strain MRSA252), this protein is Cell division protein DivIB.